Here is a 406-residue protein sequence, read N- to C-terminus: Cysteine desulfurase (406 aa).

At K226 the chain carries N6-(pyridoxal phosphate)lysine. C364 serves as the catalytic Cysteine persulfide intermediate.

Belongs to the class-V pyridoxal-phosphate-dependent aminotransferase family. Csd subfamily. In terms of assembly, homodimer. Interacts with SufE and the SufBCD complex composed of SufB, SufC and SufD. The interaction with SufE is required to mediate the direct transfer of the sulfur atom from the S-sulfanylcysteine. Requires pyridoxal 5'-phosphate as cofactor.

It localises to the cytoplasm. The enzyme catalyses (sulfur carrier)-H + L-cysteine = (sulfur carrier)-SH + L-alanine. It carries out the reaction L-selenocysteine + AH2 = hydrogenselenide + L-alanine + A + H(+). It participates in cofactor biosynthesis; iron-sulfur cluster biosynthesis. Its function is as follows. Cysteine desulfurases mobilize the sulfur from L-cysteine to yield L-alanine, an essential step in sulfur metabolism for biosynthesis of a variety of sulfur-containing biomolecules. Component of the suf operon, which is activated and required under specific conditions such as oxidative stress and iron limitation. Acts as a potent selenocysteine lyase in vitro, that mobilizes selenium from L-selenocysteine. Selenocysteine lyase activity is however unsure in vivo. This Enterobacter sp. (strain 638) protein is Cysteine desulfurase.